A 198-amino-acid chain; its full sequence is V-type proton ATPase subunit E (198 aa).

This sequence belongs to the V-ATPase E subunit family.

Produces ATP from ADP in the presence of a proton gradient across the membrane. This chain is V-type proton ATPase subunit E, found in Borrelia recurrentis (strain A1).